A 349-amino-acid chain; its full sequence is Small ribosomal subunit biogenesis GTPase RsgA 2 (349 aa).

Positions 97–252 (AEQLIATNVD…IIDTPGMREL (156 aa)) constitute a CP-type G domain. Residues 142-145 (TKAD) and 194-202 (GSSGVGKST) contribute to the GTP site. Zn(2+)-binding residues include C275, C280, H282, and C288.

Belongs to the TRAFAC class YlqF/YawG GTPase family. RsgA subfamily. In terms of assembly, monomer. Associates with 30S ribosomal subunit, binds 16S rRNA. It depends on Zn(2+) as a cofactor.

Its subcellular location is the cytoplasm. Its function is as follows. One of several proteins that assist in the late maturation steps of the functional core of the 30S ribosomal subunit. Helps release RbfA from mature subunits. May play a role in the assembly of ribosomal proteins into the subunit. Circularly permuted GTPase that catalyzes slow GTP hydrolysis, GTPase activity is stimulated by the 30S ribosomal subunit. This chain is Small ribosomal subunit biogenesis GTPase RsgA 2, found in Vibrio vulnificus (strain CMCP6).